The sequence spans 480 residues: ATP-grasp enzyme ankG (480 aa).

The tract at residues 1-30 (MYQISLKATKSAAEPTSSTDASHDDRQVER) is disordered. A compositionally biased stretch (basic and acidic residues) spans 21 to 30 (ASHDDRQVER).

It catalyses the reaction NK13650 D + L-aspartate + ATP = NK13650 C + AMP + diphosphate + H(+). The catalysed reaction is NK13650 B + L-aspartate + ATP = NK13650 A + AMP + diphosphate + H(+). The protein operates within secondary metabolite biosynthesis. In terms of biological role, ATP-grasp enzyme; part of the ank cluster that mediates the biosynthesis of NK13650 C, a highly modified cyclo-arginine-tyrosine dipeptide. AnkG catalyzes the last step of the pathway via amidation NK13650 D with L-Asp to produce NK13650 C. AnkG also amidates NK13650 B into NK13650 A. Within the pathway, the cyclodipeptide synthase ankA acts as the scaffold-generating enzyme and is responsible for formation of the cyclo-Arg-Tyr diketopiperazine (cRY) from L-Arg and L-Tyr. The ankA product cRY is desaturated by the cytochrome P450 monooxygenase ankB to yield a dehydro-cyclodipeptide intermediate. The FAD-dependent monooxygenase ankC then installs the m-OH, ankD catalyzes the attachment of L-homoserine, and ankE ligates citrate to the ankD product to yield NK13650 B. The O-methyltransferase ankF is responsible for methylation of the C-17 phenol group of NK13650 B to produce NK13650 D. Amidation of NK13650 D with L-Asp by ankG then leads to the production of NK13650 C, whereas amidation of NK13650 B produces NK13650 A. The protein is ATP-grasp enzyme ankG of Aspergillus thermomutatus (Neosartorya pseudofischeri).